Consider the following 136-residue polypeptide: Large ribosomal subunit protein uL16 (136 aa).

This sequence belongs to the universal ribosomal protein uL16 family. In terms of assembly, part of the 50S ribosomal subunit.

In terms of biological role, binds 23S rRNA and is also seen to make contacts with the A and possibly P site tRNAs. This is Large ribosomal subunit protein uL16 from Mesomycoplasma hyopneumoniae (strain 232) (Mycoplasma hyopneumoniae).